Consider the following 151-residue polypeptide: Class I hydrophobin A (151 aa).

The N-terminal stretch at 1–17 (MQFSVAAVLALATAVAA) is a signal peptide. 4 disulfide bridges follow: cysteine 52–cysteine 125, cysteine 60–cysteine 119, cysteine 61–cysteine 101, and cysteine 126–cysteine 144.

The protein belongs to the fungal hydrophobin family. In terms of assembly, interacts with cutinase cutL1 in a pH-dependent manner. Self-assembles to form functional amyloid fibrils called rodlets. Self-assembly into fibrillar rodlets occurs spontaneously at hydrophobic:hydrophilic interfaces and the rodlets further associate laterally to form amphipathic monolayers. rolA rodlet formation is regulated by the strength of ionic interactions between rolA molecules. Three types of self-assembled structures of rolA are observed: spherical, rod-like, and mesh-like.

It localises to the secreted. Its subcellular location is the cell wall. Its function is as follows. Aerial growth, conidiation, and dispersal of filamentous fungi in the environment rely upon a capability of their secreting small amphipathic proteins called hydrophobins (HPBs) with low sequence identity. Class I can self-assemble into an outermost layer of rodlet bundles on aerial cell surfaces, conferring cellular hydrophobicity that supports fungal growth, development and dispersal; whereas Class II form highly ordered films at water-air interfaces through intermolecular interactions but contribute nothing to the rodlet structure. RolA is a class I hydrophobin that undergoes a conformational change after its adsorption to hydrophobic surfaces such as the biodegradable polyester polybutylene succinate-coadipate (PBSA) and recruits the cutinase cutL1, resulting in condensation of cutL1 on the PBSA surface and consequent stimulation of PBSA hydrolysis. Increases also the activity of polyethylene terephthalate hydrolase (PETase) that hydrolyzes polyethylene terephthalate (PET), one of the most well-known polyesters that is widely used as packaging material, when the PET samples are preincubated with the hydrophobin. The wetting effect of rolA probably acts on PET surface to become hydrophilic, which leads PETase easier to contact and attack the surface. In Aspergillus oryzae (strain ATCC 42149 / RIB 40) (Yellow koji mold), this protein is Class I hydrophobin A.